Reading from the N-terminus, the 189-residue chain is Translation machinery-associated protein 22 (189 aa).

An SUI1 domain is found at 94–165; that stretch reads VTIKRIERNK…EAKDYIEKLL (72 aa).

Belongs to the DENR family. As to quaternary structure, interacts with the 40S ribosomal subunit.

It is found in the cytoplasm. In Debaryomyces hansenii (strain ATCC 36239 / CBS 767 / BCRC 21394 / JCM 1990 / NBRC 0083 / IGC 2968) (Yeast), this protein is Translation machinery-associated protein 22 (TMA22).